The chain runs to 245 residues: Eukaryotic translation initiation factor 6 (245 aa).

This sequence belongs to the eIF-6 family. As to quaternary structure, monomer. Associates with the 60S ribosomal subunit.

Its subcellular location is the cytoplasm. It is found in the nucleus. It localises to the nucleolus. Its function is as follows. Binds to the 60S ribosomal subunit and prevents its association with the 40S ribosomal subunit to form the 80S initiation complex in the cytoplasm. May also be involved in ribosome biogenesis. This chain is Eukaryotic translation initiation factor 6, found in Ostreococcus lucimarinus (strain CCE9901).